A 75-amino-acid chain; its full sequence is MAYRESFYRFLMTQRNPDSLDDIAEFANNAQHDSSFPKQEEDYEKLSEYLELNAGYLPSMSVFDKAYQLYLDNMN.

Belongs to the UPF0346 family.

The protein is UPF0346 protein LJ_1103 of Lactobacillus johnsonii (strain CNCM I-12250 / La1 / NCC 533).